The following is a 440-amino-acid chain: 23S rRNA (uracil(1939)-C(5))-methyltransferase RlmD (440 aa).

The 59-residue stretch at 11–69 (STLDTKHQPVTIERLDHQGSGLAFLHKKPLFVDGALPGEEVLIQLTENKSKYARGQLIK) folds into the TRAM domain. Cys82, Cys88, Cys91, and Cys169 together coordinate [4Fe-4S] cluster. Positions 272, 301, 306, 322, 349, and 370 each coordinate S-adenosyl-L-methionine. The Nucleophile role is filled by Cys396.

Belongs to the class I-like SAM-binding methyltransferase superfamily. RNA M5U methyltransferase family. RlmD subfamily.

The enzyme catalyses uridine(1939) in 23S rRNA + S-adenosyl-L-methionine = 5-methyluridine(1939) in 23S rRNA + S-adenosyl-L-homocysteine + H(+). Functionally, catalyzes the formation of 5-methyl-uridine at position 1939 (m5U1939) in 23S rRNA. The polypeptide is 23S rRNA (uracil(1939)-C(5))-methyltransferase RlmD (Vibrio cholerae serotype O1 (strain M66-2)).